The chain runs to 140 residues: Nucleoside diphosphate kinase (140 aa).

Residues K11, F59, R87, T93, R104, and N114 each contribute to the ATP site. H117 acts as the Pros-phosphohistidine intermediate in catalysis.

Belongs to the NDK family. In terms of assembly, homotetramer. Mg(2+) serves as cofactor.

The protein localises to the cytoplasm. The catalysed reaction is a 2'-deoxyribonucleoside 5'-diphosphate + ATP = a 2'-deoxyribonucleoside 5'-triphosphate + ADP. The enzyme catalyses a ribonucleoside 5'-diphosphate + ATP = a ribonucleoside 5'-triphosphate + ADP. In terms of biological role, major role in the synthesis of nucleoside triphosphates other than ATP. The ATP gamma phosphate is transferred to the NDP beta phosphate via a ping-pong mechanism, using a phosphorylated active-site intermediate. This is Nucleoside diphosphate kinase from Francisella tularensis subsp. holarctica (strain LVS).